Consider the following 551-residue polypeptide: Arginine--tRNA ligase (551 aa).

The 'HIGH' region signature appears at 123–133; it reads ANPTGPLTIGR.

It belongs to the class-I aminoacyl-tRNA synthetase family. Monomer.

It is found in the cytoplasm. It catalyses the reaction tRNA(Arg) + L-arginine + ATP = L-arginyl-tRNA(Arg) + AMP + diphosphate. The polypeptide is Arginine--tRNA ligase (Chlorobium phaeobacteroides (strain DSM 266 / SMG 266 / 2430)).